A 227-amino-acid polypeptide reads, in one-letter code: PKHD-type hydroxylase ABSDF3031 (227 aa).

A Fe2OG dioxygenase domain is found at 78–178 (KIIPPLFNRY…RFASFFWVQS (101 aa)). Fe cation is bound by residues His96, Asp98, and His159. Arg169 serves as a coordination point for 2-oxoglutarate.

It depends on Fe(2+) as a cofactor. The cofactor is L-ascorbate.

This Acinetobacter baumannii (strain SDF) protein is PKHD-type hydroxylase ABSDF3031.